The primary structure comprises 745 residues: MVGPGPTASAAAEERWQKLQEYLAAKGKLKDPNAKPYLKAKNICPKPPPSKYTPGPKKDVSNHVLPSKTTRPINIKFQTKPASITASQKPESKPPKLPSRGLTSRCFSSNTDCKQSSKPQQQPRAVSFTAGLSRNPRQCPDIQELKTKQQQQAHGGNAKCTHPETNTHAAKQPVDGFPDETNKENLPQALPKPEKPDPELHSIRKPNTGSSNQTQKGLAPKQILSKSSVTQTALKDRANKQFIRNTQIRTQAVKSRPRPTVADSTRPREKPPQTAPSHSVPAHNKTQTSKKPMTKNTQDITVNRVRYGKPNETKIESCPATEQKVKHTKPSSQLNVLQGGHNSRHPNMRQDQKPVQPHLGPQTSCVLQKSRAISQRPNLTARNFNSVIPSTPNMRANKTLNNKYNNIFQQKAQTLDSKFRKFPPQSHFLNKTAPRTQASTAAASRKGAPSATQTHPHGKKPEGEDRRKQLEEWQKSKGKTYKRPPMKFKTKRKVIEEMNTSFWKSIEREEEEKKAQLELSKKIDSTLTECLRLIEEGVLPNEIFTIVSSIPEAEKFAKFWVCKAKLLASKGTFDAIGLYEEAIQNGATPVQELQEVLNVLQDPCRSTEAVTSDTSAAGTNTTSAEELAKEESEQPCPSLTEMEPIAAAAPRIPVSEWDNHGIKLQVAPIPRICGMPEVQDMKLITPVRRSARIERTVARYPEMLQEHDVVVASLNELLEVDKTECFIFRENEALPVTLGFEVLES.

Disordered regions lie at residues 26-305 (KGKL…VNRV), 319-362 (PATE…LGPQ), 422-483 (FPPQ…TYKR), and 608-638 (EAVTSDTSAAGTNTTSAEELAKEESEQPCPS). 2 stretches are compositionally biased toward polar residues: residues 67–89 (SKTTRPINIKFQTKPASITASQK) and 101–136 (GLTSRCFSSNTDCKQSSKPQQQPRAVSFTAGLSRNP). A KEN box motif is present at residues 183–185 (KEN). Over residues 192–202 (KPEKPDPELHS) the composition is skewed to basic and acidic residues. Residue Lys195 forms a Glycyl lysine isopeptide (Lys-Gly) (interchain with G-Cter in SUMO1); alternate linkage. Lys195 is covalently cross-linked (Glycyl lysine isopeptide (Lys-Gly) (interchain with G-Cter in SUMO2); alternate). 4 stretches are compositionally biased toward polar residues: residues 205 to 216 (KPNTGSSNQTQK), 224 to 233 (LSKSSVTQTA), 242 to 253 (FIRNTQIRTQAV), and 284 to 301 (NKTQTSKKPMTKNTQDIT). Polar residues predominate over residues 427–442 (HFLNKTAPRTQASTAA). Basic and acidic residues predominate over residues 459-475 (KKPEGEDRRKQLEEWQK). Polar residues predominate over residues 608-624 (EAVTSDTSAAGTNTTSA). A Phosphoserine modification is found at Ser745.

Belongs to the CKAP2 family. Ubiquitinated by the anaphase promoting complex/cyclosome (APC/C). As to expression, highly expressed in regions of active neurogenesis and neural stem/progenitor cells (NSPCs), both embryonic and adult, not detected in lung, liver, kidney, heart, and skeletal muscle.

It localises to the cytoplasm. The protein localises to the cytoskeleton. Its subcellular location is the spindle pole. Functionally, microtubule-associated protein required for mitotic spindle formation and cell-cycle progression in neural progenitor cells. This is Cytoskeleton-associated protein 2-like (Ckap2l) from Mus musculus (Mouse).